We begin with the raw amino-acid sequence, 645 residues long: Sodium-dependent phosphate transporter 2 (645 aa).

Topologically, residues 1 to 5 (MAMDE) are extracellular. The chain crosses the membrane as a helical span at residues 6 to 26 (YLWMVILGFIIAFILAFSVGA). The Cytoplasmic segment spans residues 27-46 (NDVANSFGTAVGSGVVTLRQ). A helical membrane pass occupies residues 47–67 (ACILASIFETTGSVLLGAKVG). At 68-86 (ETIRKGIIDVNLYNNTVET) the chain is on the extracellular side. Asn81 carries N-linked (GlcNAc...) asparagine glycosylation. A helical membrane pass occupies residues 87 to 107 (LMAGEVSAMVGSAVWQLIASF). Over 108 to 109 (LR) the chain is Cytoplasmic. Residues 110 to 130 (FPISGTHCIVGATIGFSLVAI) traverse the membrane as a helical segment. Residues 131 to 142 (GTQGVQWMELVK) are Extracellular-facing. A helical membrane pass occupies residues 143-163 (IVASWFISPLLSGFMSGVLFV). The Cytoplasmic segment spans residues 164–190 (LIRMFILKKEDPVPNGLRALPVFYAAT). The chain crosses the membrane as a helical span at residues 191-211 (IAINVFSIMYTGAPVMGLVLP). Residues 212–213 (MW) are Extracellular-facing. The chain crosses the membrane as a helical span at residues 214 to 234 (AIALISFGVALLFALFVWLFV). Topologically, residues 235–475 (CPWMRRKITG…EEKEEKDSPE (241 aa)) are cytoplasmic. Ser253, Ser256, Ser259, Ser268, Ser316, and Ser379 each carry phosphoserine. Residues 275–320 (PGAKAHDDSTVPLTGSAADPSGTSESMSGGHHPRAPYGRALSMTHG) are disordered. The interval 448–471 (RLAPPLAEPEPPRDDPADEEKEEK) is disordered. A helical transmembrane segment spans residues 476–496 (VHLLFHFLQVLTACFGSFAHG). Topologically, residues 497 to 523 (GNDVSNAIGPLVALWLIYEQGAVLQEA) are extracellular. A helical membrane pass occupies residues 524–544 (ATPVWLLFYGGVGICTGLWVW). The Cytoplasmic segment spans residues 545–564 (GRRVIQTMGKDLTPITPSSG). The chain crosses the membrane as a helical span at residues 565 to 579 (FTIELASAFTVVIAS). At 580–586 (NIGLPVS) the chain is on the extracellular side. Residues 587–602 (TTHCKVGSVVAVGWIR) traverse the membrane as a helical segment. Topologically, residues 603–614 (SRKAVDWRLFRN) are cytoplasmic. Residues 615-635 (IFVAWFVTVPVAGLFSAAIMA) form a helical membrane-spanning segment. The Extracellular segment spans residues 636–645 (LLIHGILPFV).

This sequence belongs to the inorganic phosphate transporter (PiT) (TC 2.A.20) family. Homodimer.

The protein resides in the cell membrane. It localises to the apical cell membrane. It catalyses the reaction 2 Na(+)(out) + phosphate(out) = 2 Na(+)(in) + phosphate(in). Sodium-phosphate symporter which preferentially transports the monovalent form of phosphate with a stoichiometry of two sodium ions per phosphate ion. Plays a critical role in the determination of bone quality and strength by providing phosphate for bone mineralization. Required to maintain normal cerebrospinal fluid phosphate levels. Mediates phosphate-induced calcification of vascular smooth muscle cells (VCMCs) and can functionally compensate for loss of SLC20A1 in VCMCs. The chain is Sodium-dependent phosphate transporter 2 (SLC20A2) from Bos taurus (Bovine).